We begin with the raw amino-acid sequence, 509 residues long: ATP synthase subunit alpha (509 aa).

Position 169–176 (169–176) interacts with ATP; that stretch reads GDRQTGKT.

Belongs to the ATPase alpha/beta chains family. As to quaternary structure, F-type ATPases have 2 components, CF(1) - the catalytic core - and CF(0) - the membrane proton channel. CF(1) has five subunits: alpha(3), beta(3), gamma(1), delta(1), epsilon(1). CF(0) has four main subunits: a(1), b(1), b'(1) and c(9-12).

The protein localises to the cell inner membrane. It catalyses the reaction ATP + H2O + 4 H(+)(in) = ADP + phosphate + 5 H(+)(out). Produces ATP from ADP in the presence of a proton gradient across the membrane. The alpha chain is a regulatory subunit. The polypeptide is ATP synthase subunit alpha (Bradyrhizobium sp. (strain ORS 278)).